We begin with the raw amino-acid sequence, 59 residues long: UPF0434 protein Sputw3181_2540 (59 aa).

This sequence belongs to the UPF0434 family.

This chain is UPF0434 protein Sputw3181_2540, found in Shewanella sp. (strain W3-18-1).